The primary structure comprises 799 residues: Lon protease (799 aa).

The region spanning 7–200 (LPVLPLRDIV…KVFALMEGEI (194 aa)) is the Lon N-terminal domain. 352–359 (GPPGVGKT) serves as a coordination point for ATP. Residues 587 to 768 (VDQVGIVTGL…DEVLKHALTG (182 aa)) form the Lon proteolytic domain. Active-site residues include S674 and K717. The tract at residues 772–799 (PVEWNEAEEPITTSAKKDDGDSDAMLTH) is disordered.

The protein belongs to the peptidase S16 family. As to quaternary structure, homohexamer. Organized in a ring with a central cavity.

Its subcellular location is the cytoplasm. The catalysed reaction is Hydrolysis of proteins in presence of ATP.. Its function is as follows. ATP-dependent serine protease that mediates the selective degradation of mutant and abnormal proteins as well as certain short-lived regulatory proteins. Required for cellular homeostasis and for survival from DNA damage and developmental changes induced by stress. Degrades polypeptides processively to yield small peptide fragments that are 5 to 10 amino acids long. Binds to DNA in a double-stranded, site-specific manner. CcrM is an important target of the Lon protease pathway in C.crescentus. This chain is Lon protease, found in Caulobacter vibrioides (strain ATCC 19089 / CIP 103742 / CB 15) (Caulobacter crescentus).